Consider the following 391-residue polypeptide: Nuclear hormone receptor family member nhr-218 (391 aa).

The segment at residues 17 to 93 (PIPCQICTYQ…MGMKAEKIQQ (77 aa)) is a DNA-binding region (nuclear receptor). 2 NR C4-type zinc fingers span residues 20–40 (CQIC…CRAC) and 56–76 (CKTR…CRLC). The NR LBD domain maps to 146 to 391 (SRNYSDSPLT…DNFCNLFAMK (246 aa)).

It belongs to the nuclear hormone receptor family.

It is found in the nucleus. Functionally, orphan nuclear receptor. This is Nuclear hormone receptor family member nhr-218 (nhr-218) from Caenorhabditis elegans.